A 572-amino-acid chain; its full sequence is MEYWKHTNHGKDAGNELETSMATHGNKITNKITYILWTIILVLLSIVFIIVLINSIKSEKAHESLLQDVNNEFMEVTEKIQMASDNINDLIQSGVNTRLLTIQSHVQNYIPISLTQQMSDLRKFISEITIRNDNQEVPPQRITHDVGIKPLNPDDFWRCTSGLPSLMKTPKIRLMPGPGLLAMPTTVDGCVRTPSLVINDLIYAYTSNLITRGCQDIGKSYQVLQIGIITVNSDLVPDLNPRISHTFNINDNRKSCSLALLNTDVYQLCSTPKVDERSDYASSGIEDIVLDIVNHDGSISTTRFKNNNISFDQPYAALYPSVGPGIYYKGKIIFLGYGGLEHPINENAICNTTGCPGKTQRDCNQASHSPWFSDRRMVNSIIVVDKGLNSIPKLKVWTISMRQNYWGSEGRLLLLGNKIYIYTRSTSWHSKLQLGIIDITDYSDIRIKWTWHNVLSRPGNNECPWGHSCPDGCITGVYTDAYPLNPTGSIVSSVILDSQKSRVNPVITYSTSTERVNELAIRNKTLSAGYTTTSCITHYNKGYCFHIVEINHKSLDTFQPMLFKTEIPKSCS.

Residues 1–31 (MEYWKHTNHGKDAGNELETSMATHGNKITNK) lie on the Intravirion side of the membrane. The helical transmembrane segment at 32-52 (ITYILWTIILVLLSIVFIIVL) threads the bilayer. The Virion surface segment spans residues 53-572 (INSIKSEKAH…FKTEIPKSCS (520 aa)). Disulfide bonds link C190-C214 and C256-C269. The segment at 252–257 (NRKSCS) is involved in neuraminidase activity. N-linked (GlcNAc...) asparagine; by host glycosylation is found at N308 and N351. 2 disulfides stabilise this stretch: C355–C469 and C463–C473. An N-linked (GlcNAc...) asparagine; by host glycan is attached at N523. C535 and C544 are oxidised to a cystine.

It belongs to the paramyxoviruses hemagglutinin-neuraminidase family. As to quaternary structure, homotetramer; composed of disulfide-linked homodimers. Interacts with F protein trimer.

The protein localises to the virion membrane. Its subcellular location is the host cell membrane. The enzyme catalyses Hydrolysis of alpha-(2-&gt;3)-, alpha-(2-&gt;6)-, alpha-(2-&gt;8)- glycosidic linkages of terminal sialic acid residues in oligosaccharides, glycoproteins, glycolipids, colominic acid and synthetic substrates.. Attaches the virus to sialic acid-containing cell receptors and thereby initiating infection. Binding of HN protein to the receptor induces a conformational change that allows the F protein to trigger virion/cell membranes fusion. Functionally, neuraminidase activity ensures the efficient spread of the virus by dissociating the mature virions from the neuraminic acid containing glycoproteins. The polypeptide is Hemagglutinin-neuraminidase (HN) (Human parainfluenza 3 virus (strain Wash/47885/57) (HPIV-3)).